Here is an 825-residue protein sequence, read N- to C-terminus: Phenylalanine--tRNA ligase beta subunit (825 aa).

Residues 39 to 154 (RTWADGVVLG…EAHPLGSDVR (116 aa)) form the tRNA-binding domain. Positions 411-506 (PLERTLKLRL…RLYGYDRFSE (96 aa)) constitute a B5 domain. Mg(2+) contacts are provided by Asp484, Asp490, Glu493, and Glu494. Positions 731–824 (SPFPAADRDI…LATQFPVTLR (94 aa)) constitute an FDX-ACB domain.

The protein belongs to the phenylalanyl-tRNA synthetase beta subunit family. Type 1 subfamily. In terms of assembly, tetramer of two alpha and two beta subunits. Mg(2+) serves as cofactor.

The protein localises to the cytoplasm. The catalysed reaction is tRNA(Phe) + L-phenylalanine + ATP = L-phenylalanyl-tRNA(Phe) + AMP + diphosphate + H(+). The polypeptide is Phenylalanine--tRNA ligase beta subunit (Synechococcus sp. (strain JA-2-3B'a(2-13)) (Cyanobacteria bacterium Yellowstone B-Prime)).